The sequence spans 273 residues: uncharacterized protein (273 aa).

2 consecutive transmembrane segments (helical) span residues 24 to 44 and 103 to 123; these read VGVS…VTIL and IVGP…EAWA. The segment at 132–194 is disordered; the sequence is SDLPHHGRQS…QPPAQTQPYR (63 aa). Over residues 164–179 the composition is skewed to basic residues; that stretch reads SSHHIRSPAVARHHKT. Positions 183–192 are enriched in low complexity; the sequence is TTQPPAQTQP.

The protein localises to the cell membrane. This is an uncharacterized protein from Sinorhizobium fredii (strain NBRC 101917 / NGR234).